A 291-amino-acid chain; its full sequence is ATP synthase gamma chain (291 aa).

The protein belongs to the ATPase gamma chain family. As to quaternary structure, F-type ATPases have 2 components, CF(1) - the catalytic core - and CF(0) - the membrane proton channel. CF(1) has five subunits: alpha(3), beta(3), gamma(1), delta(1), epsilon(1). CF(0) has three main subunits: a, b and c.

The protein localises to the cell inner membrane. Functionally, produces ATP from ADP in the presence of a proton gradient across the membrane. The gamma chain is believed to be important in regulating ATPase activity and the flow of protons through the CF(0) complex. This chain is ATP synthase gamma chain, found in Sinorhizobium medicae (strain WSM419) (Ensifer medicae).